Consider the following 213-residue polypeptide: Large ribosomal subunit protein uL3 (213 aa).

The interval 124-151 is disordered; that stretch reads KRHGQSRGPMAHGSRYHRRPGSMGSIAP.

Belongs to the universal ribosomal protein uL3 family. In terms of assembly, part of the 50S ribosomal subunit. Forms a cluster with proteins L14 and L19.

One of the primary rRNA binding proteins, it binds directly near the 3'-end of the 23S rRNA, where it nucleates assembly of the 50S subunit. The chain is Large ribosomal subunit protein uL3 from Geobacillus kaustophilus (strain HTA426).